A 402-amino-acid chain; its full sequence is Protein arginine methyltransferase NDUFAF7 homolog, mitochondrial (402 aa).

It belongs to the NDUFAF7 family.

The protein localises to the mitochondrion. It carries out the reaction L-arginyl-[protein] + 2 S-adenosyl-L-methionine = N(omega),N(omega)'-dimethyl-L-arginyl-[protein] + 2 S-adenosyl-L-homocysteine + 2 H(+). Its function is as follows. Arginine methyltransferase involved in the assembly or stability of mitochondrial NADH:ubiquinone oxidoreductase complex (complex I). The sequence is that of Protein arginine methyltransferase NDUFAF7 homolog, mitochondrial from Saccharomyces cerevisiae (strain ATCC 204508 / S288c) (Baker's yeast).